The sequence spans 335 residues: DNA polymerase beta (335 aa).

Lys-41 is covalently cross-linked (Glycyl lysine isopeptide (Lys-Gly) (interchain with G-Cter in ubiquitin)). Lys-60 contacts K(+). Lys-60 contributes to the Na(+) binding site. Lys-61 participates in a covalent cross-link: Glycyl lysine isopeptide (Lys-Gly) (interchain with G-Cter in ubiquitin). K(+) is bound by residues Leu-62 and Val-65. The Na(+) site is built by Leu-62 and Val-65. Catalysis depends on Lys-72, which acts as the Nucleophile; Schiff-base intermediate with DNA; for 5'-dRP lyase activity. An N6-acetyllysine modification is found at Lys-72. A Glycyl lysine isopeptide (Lys-Gly) (interchain with G-Cter in ubiquitin) cross-link involves residue Lys-81. Residue Arg-83 is modified to Omega-N-methylarginine; by PRMT6. 3 residues coordinate K(+): Thr-101, Val-103, and Ile-106. Na(+) contacts are provided by Thr-101, Val-103, and Ile-106. A 2'-deoxyribonucleoside 5'-triphosphate is bound at residue Arg-149. Position 152 is an omega-N-methylarginine; by PRMT6 (Arg-152). A 2'-deoxyribonucleoside 5'-triphosphate is bound by residues Ser-180, Arg-183, Gly-189, and Asp-190. A DNA-binding region spans residues 183-192 (RGAESSGDMD). Mg(2+) is bound by residues Asp-190, Asp-192, and Asp-256.

The protein belongs to the DNA polymerase type-X family. In terms of assembly, monomer. Binds single-stranded DNA (ssDNA). Interacts with APEX1, LIG1, LIG3, FEN1, PCNA and XRCC1. Interacts with HUWE1/ARF-BP1, STUB1/CHIP and USP47. Interacts with FAM168A. Mg(2+) is required as a cofactor. In terms of processing, methylation by PRMT6 stimulates the polymerase activity by enhancing DNA binding and processivity. Post-translationally, ubiquitinated at Lys-41, Lys-61 and Lys-81: monoubiquitinated by HUWE1/ARF-BP1. Monoubiquitinated protein is then the target of STUB1/CHIP, which catalyzes polyubiquitination from monoubiquitin, leading to degradation by the proteasome. USP47 mediates the deubiquitination of monoubiquitinated protein, preventing polyubiquitination by STUB1/CHIP and its subsequent degradation.

Its subcellular location is the nucleus. It localises to the cytoplasm. It catalyses the reaction DNA(n) + a 2'-deoxyribonucleoside 5'-triphosphate = DNA(n+1) + diphosphate. It carries out the reaction a 5'-end 2'-deoxyribose-2'-deoxyribonucleotide-DNA = (2E,4S)-4-hydroxypenten-2-al-5-phosphate + a 5'-end 5'-phospho-2'-deoxyribonucleoside-DNA + H(+). The catalysed reaction is 2'-deoxyribonucleotide-(2'-deoxyribose 5'-phosphate)-2'-deoxyribonucleotide-DNA = a 3'-end 2'-deoxyribonucleotide-(2,3-dehydro-2,3-deoxyribose 5'-phosphate)-DNA + a 5'-end 5'-phospho-2'-deoxyribonucleoside-DNA + H(+). Functionally, repair polymerase that plays a key role in base-excision repair. During this process, the damaged base is excised by specific DNA glycosylases, the DNA backbone is nicked at the abasic site by an apurinic/apyrimidic (AP) endonuclease, and POLB removes 5'-deoxyribose-phosphate from the preincised AP site acting as a 5'-deoxyribose-phosphate lyase (5'-dRP lyase); through its DNA polymerase activity, it adds one nucleotide to the 3' end of the arising single-nucleotide gap. Conducts 'gap-filling' DNA synthesis in a stepwise distributive fashion rather than in a processive fashion as for other DNA polymerases. It is also able to cleave sugar-phosphate bonds 3' to an intact AP site, acting as an AP lyase. In Mus musculus (Mouse), this protein is DNA polymerase beta (Polb).